The primary structure comprises 307 residues: MRVLFAGTPAVALPSLEALLAAGFDVVGVLTRPDAPIGRKRVLAPSPVAARAEELGLPIIRANRLDTEVQEQIALLRPEVAAIVAYGALVPPAALTIPDYGWINLHFSLLPAWRGAAPVQHAVINGDDVTGAVTFQLEAGLDTGPVFGTVTEFIRRDDTGSALLTRLSHSGSVLLTQTLSAVAAGTATAIEQTGPVSLAPKLTIEDGRIDFSVPALAVSRRIRGVTEEPGAWTVLAGQRFKVAAATLRPDRRELAPGQLAQAGKSLLVGTGSHAIELLAVQPAGKKMMDAADWLRGVGMVDGMVFGE.

Ser-108–Pro-111 is a binding site for (6S)-5,6,7,8-tetrahydrofolate.

This sequence belongs to the Fmt family.

It carries out the reaction L-methionyl-tRNA(fMet) + (6R)-10-formyltetrahydrofolate = N-formyl-L-methionyl-tRNA(fMet) + (6S)-5,6,7,8-tetrahydrofolate + H(+). Attaches a formyl group to the free amino group of methionyl-tRNA(fMet). The formyl group appears to play a dual role in the initiator identity of N-formylmethionyl-tRNA by promoting its recognition by IF2 and preventing the misappropriation of this tRNA by the elongation apparatus. In Renibacterium salmoninarum (strain ATCC 33209 / DSM 20767 / JCM 11484 / NBRC 15589 / NCIMB 2235), this protein is Methionyl-tRNA formyltransferase.